The chain runs to 478 residues: Probable sodium/glutamine symporter GlnT (478 aa).

The next 10 helical transmembrane spans lie at 14–34 (DLLW…YFTF), 85–105 (IAIA…IIAI), 145–165 (WMGA…FNSV), 185–205 (LGLI…KRIA), 211–231 (IVVV…FSNI), 236–256 (GVLA…GGAL), 298–318 (AFGV…IILF), 342–362 (GSWA…CALI), 381–401 (LIFV…VAKV), and 411–431 (FMGL…KVVF).

This sequence belongs to the alanine or glycine:cation symporter (AGCS) (TC 2.A.25) family.

The protein resides in the cell membrane. In terms of biological role, probably functions as a sodium/glutamine symporter for glutamine uptake. The polypeptide is Probable sodium/glutamine symporter GlnT (glnT) (Bacillus subtilis (strain 168)).